A 377-amino-acid polypeptide reads, in one-letter code: Prolargin (377 aa).

The N-terminal stretch at 1–21 (MRASFFWFLPLLLILASVAQG) is a signal peptide. A disordered region spans residues 22–61 (QPRPKPGIRRKPKPRPTPSFPQPHEPAEPTDLPPPLPPGP). Composition is skewed to pro residues over residues 36–45 (RPTPSFPQPH) and 52–61 (DLPPPLPPGP). 12 LRR repeats span residues 90 to 109 (RKVPIIPPRIHYLYLQNNFI), 110 to 133 (TELPVESFKNATGLRWINLDNNRI), 134 to 157 (RKVDQRVLEKLPGLAFLYMDKNQL), 158 to 178 (EEVPSALPRNLEQLRLSQNLI), 179 to 202 (SRIPPGVFSKLENLLLLDLQHNRL), 203 to 228 (SDGVFKADTFQGLKNLMQLNLAHNIL), 229 to 249 (RRMPPKVPPAIHQLYLDSNKI), 250 to 273 (ETIPSGYFKDFPNLAFIRMNYNKL), 274 to 298 (SDRGLPKNSFNISNLLVLHLSHNKI), 299 to 318 (SNVPAISNKLEHLYLNNNSI), 319 to 357 (EKINGTQICPSNLVAFHDFSSDLENVPHLRYLRLDGNFL), and 358 to 377 (KPPIPLDLMMCFRLLQSVVI). Asn119 carries N-linked (GlcNAc...) asparagine glycosylation. Residues Asn284, Asn315, and Asn322 are each glycosylated (N-linked (GlcNAc...) asparagine). Cysteines 327 and 368 form a disulfide.

The protein belongs to the small leucine-rich proteoglycan (SLRP) family. SLRP class II subfamily. In terms of assembly, binds the basement membrane heparan sulfate proteoglycan perlecan and triple helical collagens type I and type II. Glycosylated; contains heparan sulfate.

It localises to the secreted. It is found in the extracellular space. Its subcellular location is the extracellular matrix. May anchor basement membranes to the underlying connective tissue. The chain is Prolargin (Prelp) from Rattus norvegicus (Rat).